A 546-amino-acid polypeptide reads, in one-letter code: Immunoglobulin-like domain-containing receptor 1 (546 aa).

An N-terminal signal peptide occupies residues 1-23 (MAWPKLPAPWLLLCTWLPAGCLS). One can recognise an Ig-like V-type domain in the interval 24-162 (LLVTVQHTER…TSGDPDKEVK (139 aa)). The Extracellular segment spans residues 24 to 167 (LLVTVQHTER…DKEVKLIVLH (144 aa)). The cysteines at positions 45 and 145 are disulfide-linked. The chain crosses the membrane as a helical span at residues 168-188 (WLTVIFIILGALLLLLLIGVC). The Cytoplasmic portion of the chain corresponds to 189–546 (WCQCCPQYCC…SSHSGRSVVI (358 aa)). The disordered stretch occupies residues 399 to 546 (WSGRHRSSRL…SSHSGRSVVI (148 aa)). Residues 442–457 (RCQERPRRPSPRESTQ) show a composition bias toward basic and acidic residues. Basic residues predominate over residues 458–467 (RHGRRRRHRS). Phosphoserine is present on residues serine 499 and serine 501. Residues 527 to 539 (GSVERRSEKDSSH) show a composition bias toward basic and acidic residues.

This sequence belongs to the immunoglobulin superfamily. LISCH7 family. As to quaternary structure, homooligomer. Interacts with MARVELD2 and OCLN; the interaction is required to recruit MARVELD2 to tricellular contacts. Interacts (via C-terminus) with TRA2A, TRA2B and SRSF1. Interacts with PLSCR1. In terms of tissue distribution, mainly expressed in prostate and to a lower extent in testis, pancreas, kidney, heart and liver.

It localises to the cell membrane. It is found in the cell junction. Its subcellular location is the tight junction. The protein localises to the cytoplasm. The protein resides in the cytosol. Its function is as follows. Maintains epithelial barrier function by recruiting MARVELD2/tricellulin to tricellular tight junctions (tTJs). Crucial for normal hearing by maintaining the structural and functional integrity of tTJs, which are critical for the survival of auditory neurosensory HCs. Mediates fatty acids and lipoproteins-stimulated CCK/cholecystokinin secretion in the small intestine. In the inner ear, may regulate alternative pre-mRNA splicing via binding to TRA2A, TRA2B and SRSF1. (Microbial infection) Promotes influenza virus infection by inhibiting viral nucleoprotein NP binding to PLSCR1 and thereby PLSCR1-mediated antiviral activity. This Homo sapiens (Human) protein is Immunoglobulin-like domain-containing receptor 1.